Here is a 373-residue protein sequence, read N- to C-terminus: ATP phosphoribosyltransferase regulatory subunit (373 aa).

Belongs to the class-II aminoacyl-tRNA synthetase family. HisZ subfamily. In terms of assembly, heteromultimer composed of HisG and HisZ subunits.

Its subcellular location is the cytoplasm. It functions in the pathway amino-acid biosynthesis; L-histidine biosynthesis; L-histidine from 5-phospho-alpha-D-ribose 1-diphosphate: step 1/9. Functionally, required for the first step of histidine biosynthesis. May allow the feedback regulation of ATP phosphoribosyltransferase activity by histidine. The protein is ATP phosphoribosyltransferase regulatory subunit of Rhizobium etli (strain CIAT 652).